Reading from the N-terminus, the 447-residue chain is GTPase Der (447 aa).

EngA-type G domains lie at 3–167 and 180–353; these read PVIA…ALPE and IRLA…KSAN. GTP-binding positions include 9–16, 56–60, 119–122, 186–193, 233–237, and 298–301; these read GRPNVGKS, DTGGF, NKAE, DTAGL, and NKWD. One can recognise a KH-like domain in the interval 354-438; it reads RKMPTPVLTR…PLRIEMKTSS (85 aa).

This sequence belongs to the TRAFAC class TrmE-Era-EngA-EngB-Septin-like GTPase superfamily. EngA (Der) GTPase family. As to quaternary structure, associates with the 50S ribosomal subunit.

Its function is as follows. GTPase that plays an essential role in the late steps of ribosome biogenesis. This is GTPase Der from Acidovorax sp. (strain JS42).